We begin with the raw amino-acid sequence, 310 residues long: Lymphotoxin-beta (310 aa).

Residues 1–27 are Cytoplasmic-facing; sequence MGALGLQGRGGRPQGTGCLLLAVAGAT. Residues 28–48 form a helical; Signal-anchor for type II membrane protein membrane-spanning segment; that stretch reads SLVTLLLAVPITVLAVLALVP. At 49–310 the chain is on the extracellular side; the sequence is QEQGGLVMES…LGKCLHSANV (262 aa). The interval 67-86 is disordered; that stretch reads QGLSKSNGLPSRLHSQIPSS. The region spanning 138-293 is the THD domain; it reads PAAHLIGAWM…GKTFFGAVMV (156 aa). Asn-272 is a glycosylation site (N-linked (GlcNAc...) asparagine).

The protein belongs to the tumor necrosis factor family. In terms of assembly, heterotrimer of either two LTB and one LTA subunits or (less prevalent) two LTA and one LTB subunits.

The protein resides in the membrane. Its function is as follows. Cytokine that binds to LTBR/TNFRSF3. May play a specific role in immune response regulation. Provides the membrane anchor for the attachment of the heterotrimeric complex to the cell surface. This Marmota monax (Woodchuck) protein is Lymphotoxin-beta (LTB).